The sequence spans 93 residues: Small ribosomal subunit protein uS19 (93 aa).

This sequence belongs to the universal ribosomal protein uS19 family.

Functionally, protein S19 forms a complex with S13 that binds strongly to the 16S ribosomal RNA. This Clavibacter michiganensis subsp. michiganensis (strain NCPPB 382) protein is Small ribosomal subunit protein uS19.